Here is a 393-residue protein sequence, read N- to C-terminus: Formate-dependent phosphoribosylglycinamide formyltransferase (393 aa).

N(1)-(5-phospho-beta-D-ribosyl)glycinamide-binding positions include 22-23 (EL) and Glu-82. Residues Arg-114, Lys-155, 160-165 (SSGKGQ), 195-198 (EGFI), and Glu-203 contribute to the ATP site. The ATP-grasp domain maps to 119–308 (RLAAEELDLP…QFALHARAIL (190 aa)). Glu-267 and Glu-279 together coordinate Mg(2+). N(1)-(5-phospho-beta-D-ribosyl)glycinamide contacts are provided by residues Asp-286, Lys-356, and 363–364 (RR).

Belongs to the PurK/PurT family. Homodimer.

The enzyme catalyses N(1)-(5-phospho-beta-D-ribosyl)glycinamide + formate + ATP = N(2)-formyl-N(1)-(5-phospho-beta-D-ribosyl)glycinamide + ADP + phosphate + H(+). It participates in purine metabolism; IMP biosynthesis via de novo pathway; N(2)-formyl-N(1)-(5-phospho-D-ribosyl)glycinamide from N(1)-(5-phospho-D-ribosyl)glycinamide (formate route): step 1/1. Its function is as follows. Involved in the de novo purine biosynthesis. Catalyzes the transfer of formate to 5-phospho-ribosyl-glycinamide (GAR), producing 5-phospho-ribosyl-N-formylglycinamide (FGAR). Formate is provided by PurU via hydrolysis of 10-formyl-tetrahydrofolate. The sequence is that of Formate-dependent phosphoribosylglycinamide formyltransferase from Pseudomonas putida (strain W619).